A 437-amino-acid polypeptide reads, in one-letter code: Enolase (437 aa).

Glutamine 162 contacts (2R)-2-phosphoglycerate. Glutamate 204 acts as the Proton donor in catalysis. Residues aspartate 251, glutamate 297, and aspartate 324 each contribute to the Mg(2+) site. 4 residues coordinate (2R)-2-phosphoglycerate: lysine 349, arginine 378, serine 379, and lysine 400. Catalysis depends on lysine 349, which acts as the Proton acceptor.

It belongs to the enolase family. The cofactor is Mg(2+).

It localises to the cytoplasm. Its subcellular location is the secreted. The protein localises to the cell surface. The enzyme catalyses (2R)-2-phosphoglycerate = phosphoenolpyruvate + H2O. It functions in the pathway carbohydrate degradation; glycolysis; pyruvate from D-glyceraldehyde 3-phosphate: step 4/5. Functionally, catalyzes the reversible conversion of 2-phosphoglycerate (2-PG) into phosphoenolpyruvate (PEP). It is essential for the degradation of carbohydrates via glycolysis. The chain is Enolase from Chlorobium phaeovibrioides (strain DSM 265 / 1930) (Prosthecochloris vibrioformis (strain DSM 265)).